The sequence spans 496 residues: Membrane-bound lytic murein transglycosylase F (496 aa).

Positions 1–29 (MFFRPDFRPRCAKWLIATGLFLMLGACVE) are cleaved as a signal peptide. The segment at 30 to 267 (KPTTLERVKE…RLKDRYYGHV (238 aa)) is non-LT domain. An LT domain region spans residues 268–496 (DVLGYVGAYT…SGSSPDKPAL (229 aa)). The active site involves E314. The tract at residues 464–496 (VADGNLHVPGVDKTQPPAPPAPASGSSPDKPAL) is disordered. Over residues 486 to 496 (ASGSSPDKPAL) the composition is skewed to low complexity.

This sequence in the N-terminal section; belongs to the bacterial solute-binding protein 3 family. It in the C-terminal section; belongs to the transglycosylase Slt family.

The protein localises to the cell outer membrane. It catalyses the reaction Exolytic cleavage of the (1-&gt;4)-beta-glycosidic linkage between N-acetylmuramic acid (MurNAc) and N-acetylglucosamine (GlcNAc) residues in peptidoglycan, from either the reducing or the non-reducing ends of the peptidoglycan chains, with concomitant formation of a 1,6-anhydrobond in the MurNAc residue.. In terms of biological role, murein-degrading enzyme that degrades murein glycan strands and insoluble, high-molecular weight murein sacculi, with the concomitant formation of a 1,6-anhydromuramoyl product. Lytic transglycosylases (LTs) play an integral role in the metabolism of the peptidoglycan (PG) sacculus. Their lytic action creates space within the PG sacculus to allow for its expansion as well as for the insertion of various structures such as secretion systems and flagella. This is Membrane-bound lytic murein transglycosylase F from Pseudomonas savastanoi pv. phaseolicola (strain 1448A / Race 6) (Pseudomonas syringae pv. phaseolicola (strain 1448A / Race 6)).